Consider the following 844-residue polypeptide: Bifunctional abietadiene synthase, chloroplastic (844 aa).

A chloroplast-targeting transit peptide spans 1–46 (QSIPHFSTTLNAGSSARKRRSLYLRWGKGSNKIIACVGEGATSVPY). Lys-245 contacts substrate. Positions 378 and 380 each coordinate Mg(2+). The DXDD motif motif lies at 378–381 (DIDD). Lys-465 contacts substrate. Mg(2+)-binding residues include Asp-597, Asp-601, Asn-741, Thr-745, and Glu-749. The short motif at 597–601 (DDLYD) is the DDXXD motif element.

Belongs to the terpene synthase family. Tpsd subfamily. Monomer. It depends on Mg(2+) as a cofactor.

The protein resides in the plastid. The protein localises to the chloroplast. The catalysed reaction is (2E,6E,10E)-geranylgeranyl diphosphate = (+)-copalyl diphosphate. It catalyses the reaction (+)-copalyl diphosphate = abieta-7,13-diene + diphosphate. The enzyme catalyses (+)-copalyl diphosphate = neoabietadiene + diphosphate. It carries out the reaction (+)-copalyl diphosphate = abieta-8(14),12-diene + diphosphate. It functions in the pathway terpene metabolism; oleoresin biosynthesis. Its function is as follows. Involved in defensive oleoresin formation in conifers in response to insect attack or other injury. Involved in diterpene (C20) olefins biosynthesis. Bifunctional enzyme that catalyzes two sequential cyclizations of geranylgeranyl diphosphate (GGPP) to abietadiene. The copalyl diphosphate (CPP) intermediate diffuses freely between the 2 active sites in the enzyme. The polypeptide is Bifunctional abietadiene synthase, chloroplastic (LAS) (Abies balsamea (Balsam fir)).